Here is a 370-residue protein sequence, read N- to C-terminus: Protein DUF642 L-GALACTONO-1,4-LACTONE-RESPONSIVE GENE 1 (370 aa).

Residues 1 to 22 (MMYQEAALLLALLFISSNVVLS) form the signal peptide. A glycan (N-linked (GlcNAc...) asparagine) is linked at asparagine 124.

In terms of tissue distribution, expressed at low levels in roots, seedlings and leaves.

The protein localises to the secreted. It localises to the cell wall. This chain is Protein DUF642 L-GALACTONO-1,4-LACTONE-RESPONSIVE GENE 1, found in Arabidopsis thaliana (Mouse-ear cress).